The chain runs to 65 residues: Large ribosomal subunit protein bL35 (65 aa).

Residues 23 to 44 form a disordered region; that stretch reads KRMKAGKQHILTKKSQKTKRNL.

This sequence belongs to the bacterial ribosomal protein bL35 family.

The protein is Large ribosomal subunit protein bL35 of Lachnoclostridium phytofermentans (strain ATCC 700394 / DSM 18823 / ISDg) (Clostridium phytofermentans).